The sequence spans 376 residues: Histidinol-phosphate aminotransferase 1 (376 aa).

Lysine 235 is modified (N6-(pyridoxal phosphate)lysine).

This sequence belongs to the class-II pyridoxal-phosphate-dependent aminotransferase family. Histidinol-phosphate aminotransferase subfamily. In terms of assembly, homodimer. Requires pyridoxal 5'-phosphate as cofactor.

The enzyme catalyses L-histidinol phosphate + 2-oxoglutarate = 3-(imidazol-4-yl)-2-oxopropyl phosphate + L-glutamate. Its pathway is amino-acid biosynthesis; L-histidine biosynthesis; L-histidine from 5-phospho-alpha-D-ribose 1-diphosphate: step 7/9. This Cupriavidus pinatubonensis (strain JMP 134 / LMG 1197) (Cupriavidus necator (strain JMP 134)) protein is Histidinol-phosphate aminotransferase 1.